A 245-amino-acid chain; its full sequence is Uridylate kinase (245 aa).

16–19 (KLSG) lines the ATP pocket. An involved in allosteric activation by GTP region spans residues 24–29 (GDNGFG). Gly59 is a binding site for UMP. Residues Gly60 and Arg64 each coordinate ATP. UMP is bound by residues Asp78 and 139–146 (NGAPFFTT). 3 residues coordinate ATP: Asn167, Tyr173, and Asp176.

It belongs to the UMP kinase family. Homohexamer.

The protein localises to the cytoplasm. It catalyses the reaction UMP + ATP = UDP + ADP. It functions in the pathway pyrimidine metabolism; CTP biosynthesis via de novo pathway; UDP from UMP (UMPK route): step 1/1. Allosterically activated by GTP. Inhibited by UTP. Catalyzes the reversible phosphorylation of UMP to UDP. This is Uridylate kinase from Deinococcus radiodurans (strain ATCC 13939 / DSM 20539 / JCM 16871 / CCUG 27074 / LMG 4051 / NBRC 15346 / NCIMB 9279 / VKM B-1422 / R1).